Reading from the N-terminus, the 346-residue chain is Fe(3+) ions import ATP-binding protein FbpC 1 (346 aa).

The 231-residue stretch at 5 to 235 (LEVDGVDKSF…PIDVPTAEFI (231 aa)) folds into the ABC transporter domain. Residue 37 to 44 (GPSGCGKT) coordinates ATP.

This sequence belongs to the ABC transporter superfamily. Fe(3+) ion importer (TC 3.A.1.10) family. In terms of assembly, the complex is composed of two ATP-binding proteins (FbpC), two transmembrane proteins (FbpB) and a solute-binding protein (FbpA).

The protein localises to the cell membrane. It carries out the reaction Fe(3+)(out) + ATP + H2O = Fe(3+)(in) + ADP + phosphate + H(+). In terms of biological role, part of the ABC transporter complex FbpABC involved in Fe(3+) ions import. Responsible for energy coupling to the transport system. The chain is Fe(3+) ions import ATP-binding protein FbpC 1 from Rhodococcus jostii (strain RHA1).